A 428-amino-acid chain; its full sequence is Dihydroorotase (428 aa).

Zn(2+)-binding residues include H59 and H61. Residues 61–63 and N93 each bind substrate; that span reads HLR. Residues D151, H178, and H231 each coordinate Zn(2+). N277 contributes to the substrate binding site. Residue D304 coordinates Zn(2+). The active site involves D304. Substrate-binding positions include H308 and 322–323; that span reads FG.

This sequence belongs to the metallo-dependent hydrolases superfamily. DHOase family. Class I DHOase subfamily. Requires Zn(2+) as cofactor.

The enzyme catalyses (S)-dihydroorotate + H2O = N-carbamoyl-L-aspartate + H(+). The protein operates within pyrimidine metabolism; UMP biosynthesis via de novo pathway; (S)-dihydroorotate from bicarbonate: step 3/3. Functionally, catalyzes the reversible cyclization of carbamoyl aspartate to dihydroorotate. The chain is Dihydroorotase from Bacillus cereus (strain ATCC 14579 / DSM 31 / CCUG 7414 / JCM 2152 / NBRC 15305 / NCIMB 9373 / NCTC 2599 / NRRL B-3711).